Consider the following 396-residue polypeptide: Growth-regulating factor 1 (396 aa).

One can recognise a QLQ domain in the interval 18–53; the sequence is PFTASQWQELEHQALIYKYMASGTPIPSDLILPLRR. 2 consecutive short sequence motifs (bipartite nuclear localization signal) follow at residues 86 to 105 and 123 to 130; these read RKAE…KKWR and RGKNRSRK. Residues 90-134 form the WRC domain; the sequence is DPEPGRCRRTDGKKWRCSKEAYPDSKYCEKHMHRGKNRSRKPVEM. Residues 117-176 form a disordered region; it reads CEKHMHRGKNRSRKPVEMSLATPPPPSSSATSAASNSSAGVAPTTTTTSSPAPSYSRPAP. The segment covering 120-129 has biased composition (basic residues); the sequence is HMHRGKNRSR. The span at 144–174 shows a compositional bias: low complexity; the sequence is SSATSAASNSSAGVAPTTTTTSSPAPSYSRP.

The protein belongs to the GRF family. As to expression, highly expressed in the intercalary meristem of the internode and in the shoot apex. Detected in the leaf primordia and emerging leaves in the uppermost node. Preferentially localized in the epidermis and in the tissues surrounding vascular bundles of the intercalary meristem of the internode and in adventitious roots of the second highest node. Low expression in the coleoptile and in the youngest leaf.

It localises to the nucleus. In terms of biological role, transcription activator that plays a regulatory role in gibberellin-induced stem elongation. The protein is Growth-regulating factor 1 (GRF1) of Oryza sativa subsp. indica (Rice).